The sequence spans 316 residues: Retinol dehydrogenase 7 (316 aa).

33–57 is an NADP(+) binding site; that stretch reads FITGCDSGFGNLLARQLDRRGMRVL. Ser163 contacts substrate. Tyr175 acts as the Proton acceptor in catalysis.

This sequence belongs to the short-chain dehydrogenases/reductases (SDR) family. As to expression, highly expressed in liver. Also expressed in lung, eye, kidney, and brain.

The protein localises to the microsome. Its subcellular location is the endoplasmic reticulum. The catalysed reaction is all-trans-retinol--[retinol-binding protein] + NAD(+) = all-trans-retinal--[retinol-binding protein] + NADH + H(+). It participates in cofactor metabolism; retinol metabolism. Acts on androgens and retinols, i.e. has steroid 3-alpha- and 17-beta-dehydrogenase and cis/trans-retinol catalytic activities. The polypeptide is Retinol dehydrogenase 7 (Rdh7) (Mus musculus (Mouse)).